The chain runs to 1906 residues: Zinc metalloprotease ZmpB (1906 aa).

Positions 1–33 are cleaved as a signal peptide; the sequence is MFKKDRFSIRKIKGVVGSVFLGSLLMAPSVVDA. A propeptide spanning residues 34 to 76 is cleaved from the precursor; that stretch reads ATYHYVNKEIISQEAKDLIQTGKPDRNEVVYGLVYQKDQLPQT. The short motif at 73-77 is the LPXTG sorting signal element; the sequence is LPQTG. Residue Thr76 is modified to Pentaglycyl murein peptidoglycan amidated threonine. 2 helical membrane-spanning segments follow: residues 77-98 and 105-127; these read GTEA…LLIY and SVFL…DPVA. Topologically, residues 128–1906 are extracellular; the sequence is TLALASREGV…TNSFKTSIFK (1779 aa). Residues 178 to 436 form a disordered region; sequence VETPQSITNQ…KASSVSPTDY (259 aa). Over residues 181-196 the composition is skewed to polar residues; it reads PQSITNQEQARTENQV. Composition is skewed to basic and acidic residues over residues 201 to 239, 252 to 262, 271 to 335, 352 to 375, and 383 to 408; these read EAPK…KEDS, VESKPEEKVAV, KPAE…KEET, KQTE…REDE, and EPEK…DKIK. 4 repeat units span residues 277 to 291, 293 to 315, 361 to 375, and 380 to 402. Residues 277 to 375 form a 2 X 15 AA repeats of K-V-E-Q-A-G-E-P-V-A-P-R-E-D-E region; sequence KVEQAGEPVA…GEPVAPREDE (99 aa). Positions 293-375 are 2 X 23 AA approximate repeats; sequence APVEPEKQPE…GEPVAPREDE (83 aa). The span at 421–436 shows a compositional bias: polar residues; that stretch reads LNNQIDKASSVSPTDY. His1562 contacts Zn(2+). The active site involves Glu1563. Zn(2+)-binding residues include His1566 and Glu1586.

The protein belongs to the peptidase M26 family. Requires Zn(2+) as cofactor. The Gram-positive cell-wall anchor motif LPXTG is located in the N-terminal part, in contrast to such motifs in other known streptococcal and staphylococcal proteins. The protease could be cleaved by the sortase and anchored in the membrane via the two potential N-terminal transmembrane domains, whereas the propeptide located prior to the LPXTG motif would remain attached to the cell wall peptidoglycan by an amide bond.

The protein localises to the secreted. It is found in the cell wall. Its subcellular location is the membrane. In terms of biological role, is a virulence factor capable of inducing inflammation in the lower respiratory tract, by increasing tumor necrosis factor alpha (TNF-alpha) concentration in the lungs. Also appears to have other functions important in virulence in models of pneumonia and septicemia. This is Zinc metalloprotease ZmpB (zmpB) from Streptococcus pneumoniae serotype 4 (strain ATCC BAA-334 / TIGR4).